The primary structure comprises 145 residues: Antiholin-like protein LrgA (145 aa).

4 helical membrane passes run 10–30 (PAHFFHQVIVIALVLFVSKII), 33–53 (FMPIPMPASVIGLVLLFVLLC), 72–92 (NIGLLFVPAGISVVNSLGVIS), and 96–116 (FLIIGLIIVSTILLLICTGYV).

It belongs to the CidA/LrgA family. LrgA subfamily.

The protein resides in the cell membrane. Its function is as follows. Inhibits the expression or activity of extracellular murein hydrolases by interacting, possibly with LrgB, with the holin-like proteins CidA and/or CidB. The LrgAB and CidAB proteins may affect the proton motive force of the membrane. May be involved in programmed cell death (PCD), possibly triggering PCD in response to antibiotics and environmental stresses. This Staphylococcus aureus (strain JH1) protein is Antiholin-like protein LrgA.